The sequence spans 385 residues: Transcription termination factor 2, mitochondrial (385 aa).

Residues 1–35 (MSWRLLTGYQLCRLRLFRKPQPALKIRPSSVCVTY) constitute a mitochondrion transit peptide.

The protein belongs to the mTERF family. In terms of assembly, monomer.

It is found in the mitochondrion matrix. It localises to the mitochondrion nucleoid. Binds mitochondrial DNA and plays a role in the regulation of transcription of mitochondrial mRNA and rRNA species. The protein is Transcription termination factor 2, mitochondrial (Mterf2) of Rattus norvegicus (Rat).